A 500-amino-acid polypeptide reads, in one-letter code: Ribose import ATP-binding protein RbsA (500 aa).

ABC transporter domains follow at residues 3–239 (IEMK…VGRE) and 246–493 (DRTP…TGGV). 35–42 (GENGAGKS) serves as a coordination point for ATP.

Belongs to the ABC transporter superfamily. Ribose importer (TC 3.A.1.2.1) family. As to quaternary structure, the complex is composed of an ATP-binding protein (RbsA), two transmembrane proteins (RbsC) and a solute-binding protein (RbsB).

It localises to the cell membrane. It carries out the reaction D-ribose(out) + ATP + H2O = D-ribose(in) + ADP + phosphate + H(+). Its function is as follows. Part of the ABC transporter complex RbsABC involved in ribose import. Responsible for energy coupling to the transport system. The sequence is that of Ribose import ATP-binding protein RbsA from Lacticaseibacillus paracasei (strain ATCC 334 / BCRC 17002 / CCUG 31169 / CIP 107868 / KCTC 3260 / NRRL B-441) (Lactobacillus paracasei).